The primary structure comprises 328 residues: Ribosomal protein L11 methyltransferase (328 aa).

S-adenosyl-L-methionine-binding residues include Thr-158, Gly-180, Asp-202, and Asn-246.

The protein belongs to the methyltransferase superfamily. PrmA family.

It is found in the cytoplasm. The enzyme catalyses L-lysyl-[protein] + 3 S-adenosyl-L-methionine = N(6),N(6),N(6)-trimethyl-L-lysyl-[protein] + 3 S-adenosyl-L-homocysteine + 3 H(+). In terms of biological role, methylates ribosomal protein L11. The polypeptide is Ribosomal protein L11 methyltransferase (Polynucleobacter necessarius subsp. necessarius (strain STIR1)).